Consider the following 408-residue polypeptide: Neutral cholesterol ester hydrolase 1 (408 aa).

The Cytoplasmic portion of the chain corresponds to 1 to 4 (MRSS). Residues 5 to 25 (CVLLTALLALAAYYIYIPLPS) traverse the membrane as a helical; Signal-anchor for type II membrane protein segment. At 26–408 (SVSDPWKLML…SYIKWLDQNL (383 aa)) the chain is on the lumenal side. An Involved in the stabilization of the negatively charged intermediate by the formation of the oxyanion hole motif is present at residues 113 to 115 (HGG). Ser191 is an active-site residue. 2 N-linked (GlcNAc...) asparagine glycosylation sites follow: Asn270 and Asn287. Residues Asp348 and His378 contribute to the active site. N-linked (GlcNAc...) asparagine glycosylation is present at Asn389.

Belongs to the 'GDXG' lipolytic enzyme family. N-glycosylated.

It localises to the cell membrane. The protein resides in the microsome. It catalyses the reaction a 1-O-alkyl-2-acetyl-sn-glycerol + H2O = a 1-O-alkyl-sn-glycerol + acetate + H(+). The catalysed reaction is 1-O-hexadecyl-2-acetyl-sn-glycerol + H2O = 1-O-hexadecyl-sn-glycerol + acetate + H(+). The enzyme catalyses a cholesterol ester + H2O = cholesterol + a fatty acid + H(+). It carries out the reaction cholesteryl (9Z-octadecenoate) + H2O = cholesterol + (9Z)-octadecenoate + H(+). Hydrolyzes 2-acetyl monoalkylglycerol ether (1-O-alkyl-2-acetyl-sn-glycerol), the penultimate precursor of the pathway for de novo synthesis of platelet-activating factor. May be responsible for the hydrolysis of cholesterol esters (such as cholesteryl (9Z-octadecenoate)) in macrophages. Also involved in organ detoxification by hydrolyzing exogenous organophosphorus compounds. This is Neutral cholesterol ester hydrolase 1 (NCEH1) from Bos taurus (Bovine).